A 447-amino-acid polypeptide reads, in one-letter code: DNA primase DnaG (447 aa).

A Toprim domain is found at Asp200–Glu274. Positions 206, 248, and 250 each coordinate Mg(2+). The interval Glu316–Val339 is disordered.

It belongs to the archaeal DnaG primase family. Forms a ternary complex with MCM helicase and DNA. Component of the archaeal exosome complex. Mg(2+) serves as cofactor.

It carries out the reaction ssDNA + n NTP = ssDNA/pppN(pN)n-1 hybrid + (n-1) diphosphate.. RNA polymerase that catalyzes the synthesis of short RNA molecules used as primers for DNA polymerase during DNA replication. Also part of the exosome, which is a complex involved in RNA degradation. Acts as a poly(A)-binding protein that enhances the interaction between heteromeric, adenine-rich transcripts and the exosome. The polypeptide is DNA primase DnaG (Pyrococcus furiosus (strain ATCC 43587 / DSM 3638 / JCM 8422 / Vc1)).